Here is a 173-residue protein sequence, read N- to C-terminus: Crossover junction endodeoxyribonuclease RuvC (173 aa).

Catalysis depends on residues D8, E67, and D139. Mg(2+) contacts are provided by D8, E67, and D139.

It belongs to the RuvC family. Homodimer which binds Holliday junction (HJ) DNA. The HJ becomes 2-fold symmetrical on binding to RuvC with unstacked arms; it has a different conformation from HJ DNA in complex with RuvA. In the full resolvosome a probable DNA-RuvA(4)-RuvB(12)-RuvC(2) complex forms which resolves the HJ. The cofactor is Mg(2+).

It is found in the cytoplasm. It catalyses the reaction Endonucleolytic cleavage at a junction such as a reciprocal single-stranded crossover between two homologous DNA duplexes (Holliday junction).. Its function is as follows. The RuvA-RuvB-RuvC complex processes Holliday junction (HJ) DNA during genetic recombination and DNA repair. Endonuclease that resolves HJ intermediates. Cleaves cruciform DNA by making single-stranded nicks across the HJ at symmetrical positions within the homologous arms, yielding a 5'-phosphate and a 3'-hydroxyl group; requires a central core of homology in the junction. The consensus cleavage sequence is 5'-(A/T)TT(C/G)-3'. Cleavage occurs on the 3'-side of the TT dinucleotide at the point of strand exchange. HJ branch migration catalyzed by RuvA-RuvB allows RuvC to scan DNA until it finds its consensus sequence, where it cleaves and resolves the cruciform DNA. This chain is Crossover junction endodeoxyribonuclease RuvC, found in Shewanella putrefaciens (strain CN-32 / ATCC BAA-453).